Consider the following 579-residue polypeptide: Sulfite reductase [NADPH] hemoprotein beta-component (579 aa).

[4Fe-4S] cluster-binding residues include Cys-434, Cys-440, Cys-479, and Cys-483. Position 483 (Cys-483) interacts with siroheme.

The protein belongs to the nitrite and sulfite reductase 4Fe-4S domain family. In terms of assembly, alpha(8)-beta(8). The alpha component is a flavoprotein, the beta component is a hemoprotein. Siroheme serves as cofactor. Requires [4Fe-4S] cluster as cofactor.

It catalyses the reaction hydrogen sulfide + 3 NADP(+) + 3 H2O = sulfite + 3 NADPH + 4 H(+). It functions in the pathway sulfur metabolism; hydrogen sulfide biosynthesis; hydrogen sulfide from sulfite (NADPH route): step 1/1. Component of the sulfite reductase complex that catalyzes the 6-electron reduction of sulfite to sulfide. This is one of several activities required for the biosynthesis of L-cysteine from sulfate. This is Sulfite reductase [NADPH] hemoprotein beta-component from Salmonella choleraesuis (strain SC-B67).